The primary structure comprises 424 residues: Serine--tRNA ligase (424 aa).

Residue 233-235 participates in L-serine binding; the sequence is TAE. 264 to 266 contributes to the ATP binding site; sequence RRE. E287 lines the L-serine pocket. 351–354 lines the ATP pocket; that stretch reads EISS. S387 contributes to the L-serine binding site.

Belongs to the class-II aminoacyl-tRNA synthetase family. Type-1 seryl-tRNA synthetase subfamily. As to quaternary structure, homodimer. The tRNA molecule binds across the dimer.

The protein localises to the cytoplasm. It carries out the reaction tRNA(Ser) + L-serine + ATP = L-seryl-tRNA(Ser) + AMP + diphosphate + H(+). The enzyme catalyses tRNA(Sec) + L-serine + ATP = L-seryl-tRNA(Sec) + AMP + diphosphate + H(+). The protein operates within aminoacyl-tRNA biosynthesis; selenocysteinyl-tRNA(Sec) biosynthesis; L-seryl-tRNA(Sec) from L-serine and tRNA(Sec): step 1/1. Catalyzes the attachment of serine to tRNA(Ser). Is also able to aminoacylate tRNA(Sec) with serine, to form the misacylated tRNA L-seryl-tRNA(Sec), which will be further converted into selenocysteinyl-tRNA(Sec). This Cyanothece sp. (strain PCC 7425 / ATCC 29141) protein is Serine--tRNA ligase.